Consider the following 275-residue polypeptide: Large ribosomal subunit protein uL2c (275 aa).

Disordered regions lie at residues 36–56 and 224–275; these read KNHR…HRGK and VMNP…RKRK. Residues 255-275 show a composition bias toward basic residues; sequence LGRKTRKKPKYSNRYILRKRK.

It belongs to the universal ribosomal protein uL2 family. In terms of assembly, part of the 50S ribosomal subunit.

The protein resides in the plastid. It is found in the chloroplast. The sequence is that of Large ribosomal subunit protein uL2c (rpl2) from Gracilaria tenuistipitata var. liui (Red alga).